The chain runs to 90 residues: uncharacterized protein (90 aa).

An N-terminal signal peptide occupies residues 1–21 (MFKFSIPLLLFIFLFFSCINS). The disordered stretch occupies residues 56–90 (SNEKLPERILSGSSGSCSSCSISSSNGSSSRSSKQ). Residues 66–90 (SGSSGSCSSCSISSSNGSSSRSSKQ) are compositionally biased toward low complexity. Residue N81 is glycosylated (N-linked (GlcNAc...) asparagine).

This is an uncharacterized protein from Dictyostelium discoideum (Social amoeba).